The following is a 306-amino-acid chain: Mating type protein SmtA-1 (306 aa).

The alpha box DNA-binding region spans 49-104 (APKKKVNGFMGFRSYYSPLFSQFPQKARSPFMTILWQHDPFHNEWDFMCSVYSSIR).

The protein belongs to the MATALPHA1 family.

It localises to the nucleus. Functionally, mating type proteins are sequence specific DNA-binding proteins that act as master switches in fungal differentiation by controlling gene expression in a cell type-specific fashion. Transcriptional activator that induces the transcription of alpha-specific genes. The polypeptide is Mating type protein SmtA-1 (SMTA1) (Sordaria macrospora (strain ATCC MYA-333 / DSM 997 / K(L3346) / K-hell)).